We begin with the raw amino-acid sequence, 183 residues long: Nucleosome assembly protein 1-like 5 (183 aa).

Residues 1-71 form a disordered region; the sequence is MADSENQGPA…APKPKNDFIE (71 aa). 2 stretches are compositionally biased toward low complexity: residues 7–21 and 28–49; these read QGPAEPSQAAAAAEA and AEGGAQGGDCDSAAGDPDSAAG. Residues 81-107 adopt a coiled-coil conformation; the sequence is VLALKKLQKRCDKIEAKFDKEFQALEK. The segment covering 135–161 has biased composition (acidic residues); it reads EGEEEEEEEYEDDEEEGEEEEEEEEAA. The interval 135 to 183 is disordered; sequence EGEEEEEEEYEDDEEEGEEEEEEEEAAAEAAAGAKHDDAHAEMPDDAKK. The segment covering 168–183 has biased composition (basic and acidic residues); sequence AKHDDAHAEMPDDAKK.

This sequence belongs to the nucleosome assembly protein (NAP) family.

The protein resides in the nucleus. This Pongo abelii (Sumatran orangutan) protein is Nucleosome assembly protein 1-like 5 (NAP1L5).